The sequence spans 150 residues: Histone H2B.2 (150 aa).

A compositionally biased stretch (basic and acidic residues) spans 1 to 16; it reads MAPKAEKKPAAKKPAE. Positions 1–57 are disordered; the sequence is MAPKAEKKPAAKKPAEEEPAAEKAPAGKKPKAEKRVPAGKSAGKEGGEGKRGRKKGK. 2 positions are modified to N6-acetyllysine: K7 and K34. K146 participates in a covalent cross-link: Glycyl lysine isopeptide (Lys-Gly) (interchain with G-Cter in ubiquitin).

It belongs to the histone H2B family. As to quaternary structure, the nucleosome is a histone octamer containing two molecules each of H2A, H2B, H3 and H4 assembled in one H3-H4 heterotetramer and two H2A-H2B heterodimers. The octamer wraps approximately 147 bp of DNA. In terms of processing, can be acetylated to form H2BK6ac and H2BK33ac. Post-translationally, monoubiquitinated to form H2BK143ub1; may give a specific tag for epigenetic transcriptional activation.

The protein localises to the nucleus. The protein resides in the chromosome. Functionally, core component of nucleosome. Nucleosomes wrap and compact DNA into chromatin, limiting DNA accessibility to the cellular machineries which require DNA as a template. Histones thereby play a central role in transcription regulation, DNA repair, DNA replication and chromosomal stability. DNA accessibility is regulated via a complex set of post-translational modifications of histones, also called histone code, and nucleosome remodeling. The sequence is that of Histone H2B.2 from Zea mays (Maize).